The following is a 396-amino-acid chain: MSEYSLFTSESVSEGHPDKIADQISDAVLDAIIAEDKYARVACETLVKTGVAIIAGEVSTSAWVDLEDIVRNVILDIGYNSSDVGFDGATCGVMNIIGKQSVDIAQGVDRSKPEDQGAGDQGLMFGYASNETDVLMPAPITFSHQLVQRQAEARKSGLLPWLRPDAKSQVTCRYENGKVVGVDAIVLSTQHNPDVSYKDLREGVMELIVKHVIPAHLLHKDTQFHINPTGNFIIGGPVGDCGLTGRKIIVDTYGGMARHGGGAFSGKDPSKVDRSAAYAGRYVAKNIVAAGLAERCEIQVSYAIGVAQPTSISLNTFGTGKLSDDKIIKLVRDNFDLRPYAITTMLDLLHPMYQATAAYGHFGRTPVEMTVGDDTFTAFTWEKTDRADALRAAAGL.

Residue His-16 coordinates ATP. Asp-18 provides a ligand contact to Mg(2+). A K(+)-binding site is contributed by Glu-44. Positions 57 and 100 each coordinate L-methionine. Residues 100 to 110 (QSVDIAQGVDR) are flexible loop. Residues 165–167 (DAK), Asp-240, 246–247 (RK), Ala-263, and Lys-267 contribute to the ATP site. Asp-240 contacts L-methionine. Residue Lys-271 coordinates L-methionine.

This sequence belongs to the AdoMet synthase family. Homotetramer; dimer of dimers. Mg(2+) is required as a cofactor. It depends on K(+) as a cofactor.

It is found in the cytoplasm. The catalysed reaction is L-methionine + ATP + H2O = S-adenosyl-L-methionine + phosphate + diphosphate. It participates in amino-acid biosynthesis; S-adenosyl-L-methionine biosynthesis; S-adenosyl-L-methionine from L-methionine: step 1/1. Its function is as follows. Catalyzes the formation of S-adenosylmethionine (AdoMet) from methionine and ATP. The overall synthetic reaction is composed of two sequential steps, AdoMet formation and the subsequent tripolyphosphate hydrolysis which occurs prior to release of AdoMet from the enzyme. This Pseudomonas syringae pv. tomato (strain ATCC BAA-871 / DC3000) protein is S-adenosylmethionine synthase.